Reading from the N-terminus, the 603-residue chain is Elongation factor 4 (603 aa).

Residues 2 to 184 (NHIRNFSIIA…AIVHKMPAPR (183 aa)) enclose the tr-type G domain. GTP is bound by residues 14–19 (DHGKST) and 131–134 (NKMD).

Belongs to the TRAFAC class translation factor GTPase superfamily. Classic translation factor GTPase family. LepA subfamily.

The protein resides in the cell inner membrane. The catalysed reaction is GTP + H2O = GDP + phosphate + H(+). In terms of biological role, required for accurate and efficient protein synthesis under certain stress conditions. May act as a fidelity factor of the translation reaction, by catalyzing a one-codon backward translocation of tRNAs on improperly translocated ribosomes. Back-translocation proceeds from a post-translocation (POST) complex to a pre-translocation (PRE) complex, thus giving elongation factor G a second chance to translocate the tRNAs correctly. Binds to ribosomes in a GTP-dependent manner. The sequence is that of Elongation factor 4 from Variovorax paradoxus (strain S110).